The primary structure comprises 607 residues: MNLEELKKRQEKIRNFSIIAHIDHGKSTLADRILEKTETVSSREMQAQLLDSMELERERGITIKLNAIELNYTAKDGETYIFHLIDTPGHVDFTYEVSRSLAACEGAILVVDAAQGIEAQTLANVYLALDNDLEIMPIINKIDLPAADPERVRTEIEDVIGLDASEAVLASAKAGIGIEEILEQIVEKVPAPTGDVTAPLKALIFDSVYDAYRGVILQVRVMDGVVKPGDKIQLMSNSKTFDVAEVGIFTPKAVGRDFLATGDVGYIAASIKTVQDTRVGDTVTLATNPAAEPLHGYKQMNPMVFAGLYPIESNKYNDLREALEKLQLNDASLQFEPETSQALGFGFRCGFLGLLHMDVIQERLEREFNIDLIMTAPSVIYKVNLTDGESMDVSNPSEFPDPTKIATIEEPYVKAQIMVPQEFVGAVMELAQRKRGDFVTMDYIDDNRVNVIYQIPLAEIVFDFFDKLKSSTRGYASFDYELSEYRPSKLVKMDILLNGDKVDALSFIVHKDFAYERGKLIVDKLKKIIPRQQFEVPIQAAIGHKIVARTDIKALRKNVLAKCYGGDVSRKRKLLEKQKAGKKRMKSIGSVEVPQEAFLSVLSMDEE.

The tr-type G domain maps to 11-193 (EKIRNFSIIA…QIVEKVPAPT (183 aa)). GTP is bound by residues 23–28 (DHGKST) and 140–143 (NKID).

The protein belongs to the TRAFAC class translation factor GTPase superfamily. Classic translation factor GTPase family. LepA subfamily.

It is found in the cell membrane. The enzyme catalyses GTP + H2O = GDP + phosphate + H(+). Required for accurate and efficient protein synthesis under certain stress conditions. May act as a fidelity factor of the translation reaction, by catalyzing a one-codon backward translocation of tRNAs on improperly translocated ribosomes. Back-translocation proceeds from a post-translocation (POST) complex to a pre-translocation (PRE) complex, thus giving elongation factor G a second chance to translocate the tRNAs correctly. Binds to ribosomes in a GTP-dependent manner. The protein is Elongation factor 4 of Streptococcus pneumoniae (strain P1031).